The following is a 92-amino-acid chain: uncharacterized protein (92 aa).

The next 2 helical transmembrane spans lie at 34-54 (GLGI…FMFG) and 65-85 (LLYI…ASTV).

Its subcellular location is the cell membrane. This is an uncharacterized protein from Bacillus anthracis.